We begin with the raw amino-acid sequence, 139 residues long: D-ribose pyranase (139 aa).

The active-site Proton donor is histidine 20. Substrate contacts are provided by residues aspartate 28, histidine 106, and 128–130 (YAN).

The protein belongs to the RbsD / FucU family. RbsD subfamily. In terms of assembly, homodecamer.

The protein localises to the cytoplasm. It carries out the reaction beta-D-ribopyranose = beta-D-ribofuranose. It functions in the pathway carbohydrate metabolism; D-ribose degradation; D-ribose 5-phosphate from beta-D-ribopyranose: step 1/2. Catalyzes the interconversion of beta-pyran and beta-furan forms of D-ribose. This Maridesulfovibrio salexigens (strain ATCC 14822 / DSM 2638 / NCIMB 8403 / VKM B-1763) (Desulfovibrio salexigens) protein is D-ribose pyranase.